Here is a 327-residue protein sequence, read N- to C-terminus: ATP-dependent 6-phosphofructokinase (327 aa).

Residue G12 participates in ATP binding. Residues 22 to 26 (RGVVR) and 55 to 60 (RYSVSD) contribute to the ADP site. ATP-binding positions include 73 to 74 (RF) and 103 to 106 (GDGS). D104 is a binding site for Mg(2+). 127–129 (TID) serves as a coordination point for substrate. D129 (proton acceptor) is an active-site residue. R156 provides a ligand contact to ADP. Substrate-binding positions include R164 and 171–173 (MGR). Residues 187–189 (GCE), K213, and 215–217 (KKH) each bind ADP. Residues E224, R245, and 251–254 (HIQR) each bind substrate.

Belongs to the phosphofructokinase type A (PFKA) family. ATP-dependent PFK group I subfamily. Prokaryotic clade 'B1' sub-subfamily. In terms of assembly, homotetramer. It depends on Mg(2+) as a cofactor.

The protein localises to the cytoplasm. The enzyme catalyses beta-D-fructose 6-phosphate + ATP = beta-D-fructose 1,6-bisphosphate + ADP + H(+). The protein operates within carbohydrate degradation; glycolysis; D-glyceraldehyde 3-phosphate and glycerone phosphate from D-glucose: step 3/4. Allosterically activated by ADP and other diphosphonucleosides, and allosterically inhibited by phosphoenolpyruvate. In terms of biological role, catalyzes the phosphorylation of D-fructose 6-phosphate to fructose 1,6-bisphosphate by ATP, the first committing step of glycolysis. This is ATP-dependent 6-phosphofructokinase from Hamiltonella defensa subsp. Acyrthosiphon pisum (strain 5AT).